The chain runs to 349 residues: Histidinol-phosphate aminotransferase 1 (349 aa).

Lys-213 bears the N6-(pyridoxal phosphate)lysine mark.

It belongs to the class-II pyridoxal-phosphate-dependent aminotransferase family. Histidinol-phosphate aminotransferase subfamily. In terms of assembly, homodimer. Pyridoxal 5'-phosphate is required as a cofactor.

It catalyses the reaction L-histidinol phosphate + 2-oxoglutarate = 3-(imidazol-4-yl)-2-oxopropyl phosphate + L-glutamate. It participates in amino-acid biosynthesis; L-histidine biosynthesis; L-histidine from 5-phospho-alpha-D-ribose 1-diphosphate: step 7/9. The polypeptide is Histidinol-phosphate aminotransferase 1 (Carboxydothermus hydrogenoformans (strain ATCC BAA-161 / DSM 6008 / Z-2901)).